We begin with the raw amino-acid sequence, 57 residues long: Large ribosomal subunit protein bL32 (57 aa).

Belongs to the bacterial ribosomal protein bL32 family.

The protein is Large ribosomal subunit protein bL32 of Geobacillus sp. (strain WCH70).